The chain runs to 75 residues: Metallothionein-like protein 1 (75 aa).

Belongs to the metallothionein superfamily. Type 15 family.

Its function is as follows. Metallothioneins have a high content of cysteine residues that bind various heavy metals. This Cicer arietinum (Chickpea) protein is Metallothionein-like protein 1.